Here is a 347-residue protein sequence, read N- to C-terminus: 4-hydroxy-tetrahydrodipicolinate reductase 1, chloroplastic (347 aa).

A chloroplast-targeting transit peptide spans 1-51 (MATNGLMASSSVFLHRPRIAFASRTNQTVGKYGKGRVSFMGIGTRRLPVVL). An N-acetylserine modification is found at Ser52. NAD(+) is bound by residues 79 to 84 (GCSGKM), 171 to 173 (GTT), and 194 to 197 (SPQM). Residue His230 is the Proton donor/acceptor of the active site. Lys234 functions as the Proton donor in the catalytic mechanism. 239-240 (GT) is a (S)-2,3,4,5-tetrahydrodipicolinate binding site.

Belongs to the DapB family.

The protein resides in the plastid. Its subcellular location is the chloroplast. The catalysed reaction is (S)-2,3,4,5-tetrahydrodipicolinate + NAD(+) + H2O = (2S,4S)-4-hydroxy-2,3,4,5-tetrahydrodipicolinate + NADH + H(+). It carries out the reaction (S)-2,3,4,5-tetrahydrodipicolinate + NADP(+) + H2O = (2S,4S)-4-hydroxy-2,3,4,5-tetrahydrodipicolinate + NADPH + H(+). It functions in the pathway amino-acid biosynthesis; L-lysine biosynthesis via DAP pathway; (S)-tetrahydrodipicolinate from L-aspartate: step 4/4. Catalyzes the conversion of 4-hydroxy-tetrahydrodipicolinate (HTPA) to tetrahydrodipicolinate. The sequence is that of 4-hydroxy-tetrahydrodipicolinate reductase 1, chloroplastic (DAPB1) from Arabidopsis thaliana (Mouse-ear cress).